Consider the following 306-residue polypeptide: D-alanine--D-alanine ligase (306 aa).

The region spanning 101–303 (KQVWQGIGLT…FSQLVVKILE (203 aa)) is the ATP-grasp domain. Residue 134 to 189 (VADLGLPLIVKPSLEGSSVGMTKVNEISELRGALEAAFRYDVDLLVEKWLHGPEYT) coordinates ATP. 3 residues coordinate Mg(2+): aspartate 257, glutamate 270, and asparagine 272.

It belongs to the D-alanine--D-alanine ligase family. Mg(2+) is required as a cofactor. It depends on Mn(2+) as a cofactor.

The protein resides in the cytoplasm. It carries out the reaction 2 D-alanine + ATP = D-alanyl-D-alanine + ADP + phosphate + H(+). It functions in the pathway cell wall biogenesis; peptidoglycan biosynthesis. Its function is as follows. Cell wall formation. This Photorhabdus laumondii subsp. laumondii (strain DSM 15139 / CIP 105565 / TT01) (Photorhabdus luminescens subsp. laumondii) protein is D-alanine--D-alanine ligase.